A 372-amino-acid polypeptide reads, in one-letter code: Probable leucine aminopeptidase MCYG_08380 (372 aa).

The signal sequence occupies residues 1-19 (MKVSVLAAVAAFAAATAIA). Asn-96 carries N-linked (GlcNAc...) asparagine glycosylation. The Zn(2+) site is built by His-175 and Asp-194. N-linked (GlcNAc...) asparagine glycans are attached at residues Asn-195 and Asn-219. Positions 233 and 260 each coordinate Zn(2+). A disulfide bridge connects residues Cys-305 and Cys-309. His-338 serves as a coordination point for Zn(2+).

The protein belongs to the peptidase M28 family. M28E subfamily. As to quaternary structure, monomer. Zn(2+) serves as cofactor.

Its subcellular location is the secreted. Its function is as follows. Probable extracellular aminopeptidase which contributes to pathogenicity. In Arthroderma otae (strain ATCC MYA-4605 / CBS 113480) (Microsporum canis), this protein is Probable leucine aminopeptidase MCYG_08380.